The primary structure comprises 233 residues: uncharacterized protein (233 aa).

Residues Met1–Pro23 form the signal peptide. Positions Leu42–Cys217 are disordered. The span at Asn45–Pro64 shows a compositional bias: low complexity. The segment covering His65 to His211 has biased composition (basic residues).

The protein resides in the secreted. This is an uncharacterized protein from Dictyostelium discoideum (Social amoeba).